A 494-amino-acid chain; its full sequence is SNF1-related protein kinase catalytic subunit alpha KIN12 (494 aa).

In terms of domain architecture, Protein kinase spans 19 to 270 (YRIGKTLGHG…ITEIRQHPWF (252 aa)). Residues 25 to 33 (LGHGSFAKV) and K48 contribute to the ATP site. D142 serves as the catalytic Proton acceptor. A Phosphothreonine modification is found at T175. Positions 289 to 386 (AKKIEEEIIQ…GLKSNVKDDK (98 aa)) are auto-inhibitory domain (AID). In terms of domain architecture, UBA spans 291–331 (KIEEEIIQNVVNIGFDRNHVVDSLANRIQNEATVAYHLILD). The interval 293-494 (EEEIIQNVVN…VAFLRELGVL (202 aa)) is regulatory domain (RD). The interval 387 to 494 (TWTLGLQSQG…VAFLRELGVL (108 aa)) is PPI. Residues 445-493 (AIILPTVIKFEIQLYKVREGKYLLDILRIDGPQFIFFDLCVAFLRELGV) enclose the KA1 domain.

This sequence belongs to the protein kinase superfamily. CAMK Ser/Thr protein kinase family. SNF1 subfamily. In terms of assembly, subunit of a probable heterotrimeric complex consisting of an alpha catalytic subunit, and a beta (KINB) and a gamma (KING or SNF4) non-catalytic regulatory subunits. In terms of processing, autophosphorylated. In terms of tissue distribution, expressed at very low levels.

The enzyme catalyses L-seryl-[protein] + ATP = O-phospho-L-seryl-[protein] + ADP + H(+). The catalysed reaction is L-threonyl-[protein] + ATP = O-phospho-L-threonyl-[protein] + ADP + H(+). Its activity is regulated as follows. Activated by phosphorylation at Thr-175. In terms of biological role, catalytic subunit of the probable trimeric SNF1-related protein kinase (SnRK) complex, a central regulator of cellular energy homeostasis, which, in response to seemingly unrelated darkness, sugar and stress conditions, activates energy-producing pathways and inhibits energy-consuming processes. May also be involved in the regulation of fatty acid synthesis by phosphorylation of acetyl-CoA carboxylase and in assimilation of nitrogen by phosphorylating nitrate reductase. In Arabidopsis thaliana (Mouse-ear cress), this protein is SNF1-related protein kinase catalytic subunit alpha KIN12.